Here is a 340-residue protein sequence, read N- to C-terminus: Glyceraldehyde-3-phosphate dehydrogenase 2 (340 aa).

Residues 12–13 (RI), Arg-78, and Thr-120 each bind NADP(+). D-glyceraldehyde 3-phosphate contacts are provided by residues 151 to 153 (SCT) and Thr-182. Residue Cys-152 is the Nucleophile of the active site. Asn-183 provides a ligand contact to NADP(+). D-glyceraldehyde 3-phosphate-binding positions include Arg-197, 210–211 (TG), and Arg-233. An NADP(+)-binding site is contributed by Asn-315.

Belongs to the glyceraldehyde-3-phosphate dehydrogenase family. In terms of assembly, homotetramer. Interacts with BrxC. In response to oxidative stress, the active site Cys likely reacts with bacillithiol (BSH) to form mixed disulfides to protect the Cys residue against overoxidation. S-bacillithiolation presumably leads to loss of catalytic activity. Debacillithiolation by monothiol bacilliredoxin BrxC restores the activity.

The protein resides in the cytoplasm. The enzyme catalyses D-glyceraldehyde 3-phosphate + phosphate + NADP(+) = (2R)-3-phospho-glyceroyl phosphate + NADPH + H(+). It carries out the reaction D-glyceraldehyde 3-phosphate + phosphate + NAD(+) = (2R)-3-phospho-glyceroyl phosphate + NADH + H(+). The protein operates within carbohydrate biosynthesis; gluconeogenesis. Its function is as follows. Involved in the gluconeogenesis. Catalyzes the oxidative phosphorylation of glyceraldehyde 3-phosphate (G3P) to 1,3-bisphosphoglycerate (BPG) using the cofactor NADP. The first reaction step involves the formation of a hemiacetal intermediate between G3P and a cysteine residue, and this hemiacetal intermediate is then oxidized to a thioester, with concomitant reduction of NADP to NADPH. The reduced NADPH is then exchanged with the second NADP, and the thioester is attacked by a nucleophilic inorganic phosphate to produce BPG. The chain is Glyceraldehyde-3-phosphate dehydrogenase 2 from Bacillus subtilis (strain 168).